The following is a 400-amino-acid chain: Subtilisin-like protease 7 (400 aa).

The signal sequence occupies residues 1–20 (MGFITKAIPLALAAASVING). Residues 21–119 (AEIMETRAGV…IERDARVQIN (99 aa)) constitute a propeptide that is removed on maturation. One can recognise an Inhibitor I9 domain in the interval 36–118 (KYIVVMNDGM…YIERDARVQI (83 aa)). N-linked (GlcNAc...) asparagine glycosylation occurs at Asn58. Positions 129 to 400 (SWGLARVGSK…SKLINNGSGM (272 aa)) constitute a Peptidase S8 domain. Residues Asp161 and His192 each act as charge relay system in the active site. Asn222 and Asn252 each carry an N-linked (GlcNAc...) asparagine glycan. Ser346 serves as the catalytic Charge relay system. An N-linked (GlcNAc...) asparagine glycan is attached at Asn396.

The protein belongs to the peptidase S8 family.

The protein localises to the secreted. In terms of biological role, secreted subtilisin-like serine protease with keratinolytic activity that contributes to pathogenicity. In Trichophyton verrucosum (Cattle ringworm fungus), this protein is Subtilisin-like protease 7 (SUB7).